A 445-amino-acid polypeptide reads, in one-letter code: tRNA modification GTPase MnmE (445 aa).

3 residues coordinate (6S)-5-formyl-5,6,7,8-tetrahydrofolate: Arg20, Glu79, and Lys119. One can recognise a TrmE-type G domain in the interval 215 to 371; sequence GLKLAIIGPP…ILKNIEEIAE (157 aa). Asn225 provides a ligand contact to K(+). GTP contacts are provided by residues 225–230, 244–250, and 269–272; these read NAGKSS, SNIAGTT, and DTAG. Mg(2+) is bound at residue Ser229. Residues Ser244, Ile246, and Thr249 each contribute to the K(+) site. A Mg(2+)-binding site is contributed by Thr250. Lys445 lines the (6S)-5-formyl-5,6,7,8-tetrahydrofolate pocket.

It belongs to the TRAFAC class TrmE-Era-EngA-EngB-Septin-like GTPase superfamily. TrmE GTPase family. Homodimer. Heterotetramer of two MnmE and two MnmG subunits. Requires K(+) as cofactor.

It localises to the cytoplasm. Functionally, exhibits a very high intrinsic GTPase hydrolysis rate. Involved in the addition of a carboxymethylaminomethyl (cmnm) group at the wobble position (U34) of certain tRNAs, forming tRNA-cmnm(5)s(2)U34. This is tRNA modification GTPase MnmE from Rickettsia bellii (strain OSU 85-389).